Reading from the N-terminus, the 325-residue chain is Tumor necrosis factor soluble receptor (325 aa).

The first 16 residues, 1–16 (MLRLIALLVCVVYVYG), serve as a signal peptide directing secretion. TNFR-Cys repeat units lie at residues 27–62 (KCGG…TVCS), 63–104 (PCED…DRVC), 105–147 (NCST…TLCE), and 148–186 (KCPP…TSCT). 6 cysteine pairs are disulfide-bonded: Cys28–Cys39, Cys40–Cys53, Cys43–Cys61, Cys64–Cys79, Cys82–Cys96, and Cys86–Cys104. The N-linked (GlcNAc...) asparagine; by host glycan is linked to Asn105. 4 disulfides stabilise this stretch: Cys106/Cys120, Cys123/Cys146, Cys129/Cys149, and Cys164/Cys185. N-linked (GlcNAc...) asparagine; by host glycans are attached at residues Asn181, Asn205, and Asn238.

In terms of biological role, binds to TNF-alpha and beta. Probably prevents TNF to reach cellular target and thereby deampening the potential antiviral effects of the cytokine. This chain is Tumor necrosis factor soluble receptor, found in Oryctolagus cuniculus (Rabbit).